The sequence spans 477 residues: Serine/threonine protein phosphatase 2A 55 kDa regulatory subunit B' delta isoform (477 aa).

Belongs to the phosphatase 2A regulatory subunit B56 family. As to quaternary structure, PP2A consists of a common heteromeric enzyme, composed of a catalytic subunit (subunits C), a constant regulatory subunit (subunit A), and a variety of regulatory subunits such as subunits B (the R2/B/PR55/B55, R3/B''/PR72/PR130/PR59 and R5/B'/B56 families). Interacts with SRK2E/OST1. As to expression, expressed ubiquitously.

It localises to the cytoplasm. In terms of biological role, the B regulatory subunit may modulate substrate selectivity and catalytic activity, and may also direct the localization of the catalytic enzyme to a particular subcellular compartment. This chain is Serine/threonine protein phosphatase 2A 55 kDa regulatory subunit B' delta isoform (B'DELTA), found in Arabidopsis thaliana (Mouse-ear cress).